We begin with the raw amino-acid sequence, 595 residues long: Protein UL31 (595 aa).

Residues 1 to 23 (MGDKPTLVTLLTVAVSSPPPSSP) form the signal peptide. The tract at residues 47 to 94 (TATSEVGEKTAEQEVAAADPETGNERRENRENEGGETRTTGTTAVKRS) is disordered. Over residues 69–82 (GNERRENRENEGGE) the composition is skewed to basic and acidic residues. Residues Asn-176 and Asn-197 are each glycosylated (N-linked (GlcNAc...) asparagine; by host).

The protein belongs to the herpesviridae U10 family. Interacts with host CGAS.

It localises to the host cytoplasm. The protein localises to the host nucleus. In terms of biological role, plays a role in the inhibition of host innate immune system by targeting host CGAS and promoting dissociation of DNA from CGAS, thereby inhibiting the enzymatic activity of CGAS. The polypeptide is Protein UL31 (Homo sapiens (Human)).